The sequence spans 373 residues: Beta sliding clamp (373 aa).

Belongs to the beta sliding clamp family. In terms of assembly, forms a ring-shaped head-to-tail homodimer around DNA which binds and tethers DNA polymerases and other proteins to the DNA. The DNA replisome complex has a single clamp-loading complex (3 tau and 1 each of delta, delta', psi and chi subunits) which binds 3 Pol III cores (1 core on the leading strand and 2 on the lagging strand) each with a beta sliding clamp dimer. Additional proteins in the replisome are other copies of gamma, psi and chi, Ssb, DNA helicase and RNA primase.

The protein localises to the cytoplasm. In terms of biological role, confers DNA tethering and processivity to DNA polymerases and other proteins. Acts as a clamp, forming a ring around DNA (a reaction catalyzed by the clamp-loading complex) which diffuses in an ATP-independent manner freely and bidirectionally along dsDNA. Initially characterized for its ability to contact the catalytic subunit of DNA polymerase III (Pol III), a complex, multichain enzyme responsible for most of the replicative synthesis in bacteria; Pol III exhibits 3'-5' exonuclease proofreading activity. The beta chain is required for initiation of replication as well as for processivity of DNA replication. In Mycoplasmopsis pulmonis (strain UAB CTIP) (Mycoplasma pulmonis), this protein is Beta sliding clamp (dnaN).